A 195-amino-acid polypeptide reads, in one-letter code: Pyridoxal 5'-phosphate synthase subunit PdxT (195 aa).

Position 46 to 48 (46 to 48 (GES)) interacts with L-glutamine. The active-site Nucleophile is C78. L-glutamine-binding positions include R107 and 136–137 (IR). Active-site charge relay system residues include H173 and E175.

Belongs to the glutaminase PdxT/SNO family. In the presence of PdxS, forms a dodecamer of heterodimers. Only shows activity in the heterodimer.

The enzyme catalyses aldehydo-D-ribose 5-phosphate + D-glyceraldehyde 3-phosphate + L-glutamine = pyridoxal 5'-phosphate + L-glutamate + phosphate + 3 H2O + H(+). The catalysed reaction is L-glutamine + H2O = L-glutamate + NH4(+). The protein operates within cofactor biosynthesis; pyridoxal 5'-phosphate biosynthesis. Its function is as follows. Catalyzes the hydrolysis of glutamine to glutamate and ammonia as part of the biosynthesis of pyridoxal 5'-phosphate. The resulting ammonia molecule is channeled to the active site of PdxS. The protein is Pyridoxal 5'-phosphate synthase subunit PdxT of Dehalococcoides mccartyi (strain ATCC BAA-2266 / KCTC 15142 / 195) (Dehalococcoides ethenogenes (strain 195)).